We begin with the raw amino-acid sequence, 480 residues long: MNALKERKEAFVSGLEGGSIAEINLVTTVALTAYFGWQLLNRRLDSVPLVVDFLLNWAGLLLSITVYANDPVLLNLLIAVPCIVQLQILGRSSQRKTQPQKGKESARLGLDRKPFITAYRGGMLIITCLAILAVDFPVFPRRFAKVETWGTSLMDLGVGSFVFSNGLVAASALLKQEISGQRPPLWSRLVSSVRSAGILLALGVARLVSVKGLEYQEHVTEYGTSWNFFFTLALVPLAMILVDPICTYVPRVFIALLLSVFSEYLLQKEGFLQFMIMSKRDNFFNSNREGILSFLGYCAIFLLGQNTGFYVLGNRPTVNNLYRPSGQSWQQNRRQRLSAWDKWTSVTPLAGLLAWFFITVALFQLTMAYHPYTVSRRFANLPYVLWVAAYNLGFLSMYCMVDSLFNLSQHSNNVPVTLDAVNSNGLFVFLLANCLTGLINMNMNTLDSTLTVQIAALFGYATVIASVAIIMYKCRIFIKL.

11 helical membrane passes run 20–40 (IAEI…WQLL), 47–67 (VPLV…ITVY), 70–90 (DPVL…QILG), 114–134 (PFIT…ILAV), 153–173 (LMDL…ASAL), 186–208 (WSRL…ARLV), 228–248 (FFFT…ICTY), 252–272 (VFIA…EGFL), 291–311 (ILSF…GFYV), 343–363 (WTSV…VALF), and 381–401 (LPYV…YCMV). A glycan (N-linked (GlcNAc...) asparagine) is linked at asparagine 406. Helical transmembrane passes span 426 to 446 (LFVF…MNTL) and 450 to 470 (LTVQ…VAII).

The protein belongs to the PIGW family.

The protein resides in the endoplasmic reticulum membrane. Its pathway is glycolipid biosynthesis; glycosylphosphatidylinositol-anchor biosynthesis. Functionally, probable acetyltransferase, which acetylates the inositol ring of phosphatidylinositol during biosynthesis of GPI-anchor. The sequence is that of GPI-anchored wall transfer protein 1 (GWT1) from Eremothecium gossypii (strain ATCC 10895 / CBS 109.51 / FGSC 9923 / NRRL Y-1056) (Yeast).